Reading from the N-terminus, the 189-residue chain is UPF0398 protein lhv_1265 (189 aa).

It belongs to the UPF0398 family.

This is UPF0398 protein lhv_1265 from Lactobacillus helveticus (strain DPC 4571).